The sequence spans 461 residues: tRNA modification GTPase MnmE (461 aa).

The (6S)-5-formyl-5,6,7,8-tetrahydrofolate site is built by Arg-23, Glu-88, and Arg-127. The TrmE-type G domain occupies 223 to 383; sequence GLNTVIVGKP…LKECIKNLFF (161 aa). Asn-233 lines the K(+) pocket. GTP is bound by residues 233–238, 252–258, and 277–280; these read NVGKSS, TEIPGTT, and DTAG. Position 237 (Ser-237) interacts with Mg(2+). Residues Thr-252, Ile-254, and Thr-257 each coordinate K(+). Thr-258 provides a ligand contact to Mg(2+). Lys-461 serves as a coordination point for (6S)-5-formyl-5,6,7,8-tetrahydrofolate.

It belongs to the TRAFAC class TrmE-Era-EngA-EngB-Septin-like GTPase superfamily. TrmE GTPase family. In terms of assembly, homodimer. Heterotetramer of two MnmE and two MnmG subunits. K(+) serves as cofactor.

The protein localises to the cytoplasm. In terms of biological role, exhibits a very high intrinsic GTPase hydrolysis rate. Involved in the addition of a carboxymethylaminomethyl (cmnm) group at the wobble position (U34) of certain tRNAs, forming tRNA-cmnm(5)s(2)U34. The polypeptide is tRNA modification GTPase MnmE (Clostridium botulinum (strain Loch Maree / Type A3)).